A 4660-amino-acid chain; its full sequence is MERGAAAAAWMLLLAIAACLEPVSSQECGSGNFRCDNGYCIPASWRCDGTRDCLDDTDEIGCPPRSCESGLFLCPAEGTCIPSSWVCDEDKDCSDGADEQQNCAGTTCSAQQMTCSNGQCIPSEYRCDHVSDCPDGSDERNCHYPTCDQLTCANGACYNTSQRCDQKVDCRDSSDEANCTTLCSQKEFECGSGECILRAYVCDHDNDCEDNSDERNCNYDTCGGHQFTCSNGQCINQNWVCDGDDDCQDSGDEDGCESNQSHHRCYPREWACPGSGRCISIDKVCDGVPDCPEGDDENNVTSGRTCGMGVCSVLNCEYQCHQTPFGGECFCPPGHIINSNDSRTCIDFDDCQIWGICDQKCENRQGRHQCLCEEGYILERGQHCKSSDSFSAASVIFSNGRDLLVGDLHGRNFRILAESKNRGMVMGVDFHYQKHRVFWTDPMQEKVFSTDINGLNTQEILNVSVDTPENLAVDWINNKLYLVETKVNRIDVVNLEGNQRVTLITENLGHPRGIALDPTVGYLFFSDWGSLSGQPKVERAFMDGSNRKDLVTTKVGWPAGITLDLVSKRVYWVDSRYDYIETVTYDGIQRKTVARGGSLVPHPFGISLFEEHVFFTDWTKMAVMKASKFTETNPQVYHQSSLRPHGVTVYHALRQPNATNPCGSNNGGCAQVCVLSHRTDNGGLGYRCKCEFGFELDDDEHRCVAVKNFLLFSSKTAVRGIPFTLSTQEDVMVPVTGSPSFFVGIDFDAQHSTVFYSDLSKDIIYKQKIDGTGKEVITANRLESVECLTFDWISRNLYWTDGGLKSVTVLRLADKSRRQIISNLNNPRSIVVHPTAGYMFLSDWFRPAKIMRAWSDGSHLMPIVNTSLGWPNGLAIDWSASRLYWVDAFFDKIEHSTLDGLDRKRLGHVDQMTHPFGLTVFKDNVFITDWRLGAIIRVRKSDGGDMTVIRRGISSVMHVKAYDADLQTGSNYCSQTTHANGDCSHFCFPVPNFQRVCGCPYGMKLQRDQMTCEGDPAREPPTQQCGSLSFPCNNGKCVPSFFRCDGVDDCHDNSDEHQCGVFNNTCSPSAFACVRGGQCIPGQWHCDRQNDCLDGSDEQNCPTHATSSTCPSTSFTCDNHVCIPKDWVCDTDNDCSDGSDEKNCQASGTCQPTQFRCPDHRCISPLYVCDGDKDCADGSDEAGCVLNCTSAQFKCADGSSCINSRYRCDGVYDCRDNSDEAGCPTRPPGMCHPDEFQCQGDGTCIPNTWECDGHPDCIHGSDEHTGCVPKTCSPTHFLCDNGNCIYKAWICDGDNDCRDMSDEKDCPTQPFHCPSTQWQCPGYSTCINLSALCDGVFDCPNGTDESPLCNQDSCSHFNGGCTHQCMQGPFGATCLCPLGYQLANDTKTCEDINECDIPGFCSQHCVNMRGSFRCACDPEYTLESDGRTCKVTGSENPLLVVASRDKIIVDNITAHTHNLYSLVQDVSFVVALDFDSVTGRVFWSDLLQGKTWSVFQNGTDKRVVHDSGLSVTEMIAVDWIGRNLYWTDYALETIEVSKIDGSHRTVLISKNVTKPRGLALDPRMGDNVMFWSDWGHHPRIERASMDGTMRTVIVQEKIYWPCGLSIDYPNRLIYFMDAYLDYIEFCDYDGHNRRQVIASDLVLHHPHALTLFEDFVYWTDRGTRQVMQANKWHGGNQSVVMYSVHQPLGITAIHPSRQPPSRNPCASASCSHLCLLSAQAPRHYSCACPSGWNLSDDSVNCVRGDQPFLMSVRDNIIFGISLDPEVKSNDAMVPISGIQHGYDVEFDDSEQFIYWVENPGEIHRVKTDGSNRTVFAPLSLLGSSLGLALDWVSRNIYYTTPASRSIEVLTLKGDTRYGKTLIANDGTPLGVGFPVGIAVDPARGKLYWSDHGTDSGVPAKIASANMDGTSLKILFTGNLQHLEVVTLDIQEQKLYWAVTSRGVIERGNVDGTERMILVHHLAHPWGLVVYGSFLYYSDEQYEVIERVDKSSGNNKVVLRDNVPYLRGLRVYHRRNAADSSNGCSNNPNACQQICLPVPGGMFSCACASGFKLSPDGRSCSPYNSFMVVSMLPAVRGFSLELSDHSEAMVPVAGQGRNVLHADVDVANGFIYWCDFSSSVRSSNGIRRIKPDGSNFTNVVTYGIGANGIRGVALDWAAGNLYFTNAFVYETLIEVLRINTTYRRVLLKVSVDMPRHIIVDPKHRYLFWADYGQKPKIERSFLDCTNRTVLVSEGIVTPRGLAMDHDTGYIYWVDDSLDLIARIHLDGGESQVVRYGSRYPTPYGITVFGESIIWVDRNLKKVFQASKQPGNTDPPVVIRDKINLLRDVTIFDEHAQPLSPAELNNNPCLQSNGGCSHFCFALPELPTPRCGCAFGTLGNDGKSCATSQEDFLIYSLNNSLRSLHFDPRDHSLPFQVISVAGTAIALDYDRRNNRIFFTQKLNSLRGQISYVSLYSGSSSPTVLLSNIGVTDGIAFDWINRRIYYSDFSNQTINSMAEDGSNRAVIARVSKPRAIVLDPCRGYMYWTDWGTNAKIERATLGGNFRVPIVNTSLVWPNGLALDLETDLLYWADASLQKIERSTLTGTNREVVVSTAFHSFGLTVYGQYIYWTDLYTRKIYRANKYDGSDLVAMTTRLPTQPSGISTVVKTQRQQCSNPCDQFNGGCSHICAPGPNGAECQCPHEGNWYLANDNKYCVVDTGTRCNQLQFTCLNGHCINQDWKCDNDNDCGDGSDELPTVCAFHTCRSTAFTCGNGRCVPYHYRCDYYNDCGDNSDEAGCLFRNCNSTTEFTCSNGRCIPLSYVCNGINNCHDNDTSDEKNCPPHTCPPDFTKCQTTNICVPRAFLCDGDNDCGDGSDENPIYCASHTCRSNEFQCLSPQRCIPSYWFCDGEADCADGSDEPDTCGHSVNTCRASQFQCDNGRCISGNWVCDGDNDCGDMSDEDQRHHCELQNCSSTQFTCVNSRPPNRRCIPQYWVCDGDADCSDALDELQNCTMRTCSAGEFSCANGRCVRQSFRCDRRNDCGDYSDERGCSYPPCHANQFTCQNGRCIPRFFVCDEDNDCGDGSDEQEHLCHTPEPTCPLHQFRCDNGHCIEMGRVCNHVDDCSDNSDEKGCGINECLDSSISRCDHNCTDTITSFYCSCLPGYKLMSDKRSCVDIDECKESPQLCSQKCENVVGSYICKCAPGYIREPDGKSCRQNSNIEPYLIFSNRYYIRNLTTDGSSYSLILQGLGNVVALDFDRVEKRLYWIDAEKQIIERMFLNKTNRETIINHRLRRAESLAVDWVSRKLYWLDAILDCLFVSDLEGRHRKMIAQHCVDANNTFCFEHPRGIVLHPQRGHVYWADWGVHAYIGRIGMDGTNKSVIISTKIEWPNAITIDYTNDLLYWADAHLGYIEFSDLEGHHRHTVYDGSLPHPFALTIFEDTVFWTDWNTRTVEKGNKYDGSGRVVLVNTTHKPFDIHVYHPYRQPIMSNPCGTNNGGCSHLCLIKAGGRGFTCACPDDFQTVQLRDRTLCMPMCSSTQFLCGNNEKCIPIWWKCDGQKDCSDGSDEPDLCPHRFCRLGQFQCRDGNCTSPQALCNARQDCADGSDEDRVLCEHHRCESNEWQCANKRCIPQSWQCDSVNDCLDNSDEDTSHCASRTCRPGQFKCNNGRCIPQSWKCDVDNDCGDYSDEPIDECTTAAYNCDNHTEFSCKTNYRCIPQWAVCNGFDDCRDNSDEQGCESVPCHPSGDFRCANHHCIPLRWKCDGTDDCGDNSDEENCVPRECSESEFRCADQQCIPSRWVCDQENDCGDNSDERDCEMKTCHPEHFQCTSGHCVPKALACDGRADCLDASDESACPTRFPNGTYCPAAMFECKNHVCIQSFWICDGENDCVDGSDEEIHLCFNIPCESPQRFRCDNSRCVYGHQLCNGVDDCGDGSDEKEEHCRKPTHKPCTDTEYKCSNGNCISQHYVCDNVNDCGDLSDETGCNLGDNRTCAENICEQNCTQLSSGGFICSCRPGFKPSTSDKNSCQDINECEEFGICPQSCRNSKGSYECFCVDGFKSMSTHYGERCAADGSPPLLLLPENVRIRKYNTSSEKFSEYLEEEEHIQTIDYDWDPEHIGLSVVYYTVLAQGSQFGAIKRAYIPNFESGSNNPIREVDLGLKYLMQPDGLAVDWVGRHIYWSDAKSQRIEVATLDGRYRKWLITTQLDQPAAIAVNPKLGLMFWTDQGKQPKIESAWMNGEHRSVLVSENLGWPNGLSIDYLNDDRVYWSDSKEDVIEAIKYDGTDRRLIINEAMKPFSLDIFEDKLYWVAKEKGEVWRQNKFGKENKEKVLVVNPWLTQVRIFHQLRYNQSVSNPCKQVCSHLCLLRPGGYSCACPQGSDFVTGSTVQCDAASELPVTMPPPCRCMHGGNCYFDENELPKCKCSSGYSGEYCEVGLSRGIPPGTTMAVLLTFVIVIIVGALVLVGLFHYRKTGSLLPTLPKLPSLSSLAKPSENGNGVTFRSGADVNMDIGVSPFGPETIIDRSMAMNEHFVMEVGKQPVIFENPMYAAKDNTSKVALAVQGPSTGAQVTVPENVENQNYGRPIDPSEIVPEPKPASPGADEIQGKKWNIFKRKPKQTTNFENPIYAEMDSEVKDAVAVAPPPSPSLPAKASKRNLTPGYTATEDTFKDTANLVKEDSDV.

The signal sequence occupies residues 1-25 (MERGAAAAAWMLLLAIAACLEPVSS). At 26–4425 (QECGSGNFRC…LSRGIPPGTT (4400 aa)) the chain is on the extracellular side. LDL-receptor class A domains follow at residues 27–63 (ECGS…IGCP), 66–104 (SCES…QNCA), 107–143 (TCSA…RNCH), 141–180 (NCHY…ANCT), 182–218 (LCSQ…RNCN), and 221–257 (TCGG…DGCE). 18 disulfide bridges follow: cysteine 28-cysteine 40, cysteine 35-cysteine 53, cysteine 47-cysteine 62, cysteine 67-cysteine 80, cysteine 74-cysteine 93, cysteine 87-cysteine 103, cysteine 108-cysteine 120, cysteine 115-cysteine 133, cysteine 127-cysteine 142, cysteine 142-cysteine 157, cysteine 152-cysteine 170, cysteine 164-cysteine 179, cysteine 183-cysteine 195, cysteine 190-cysteine 208, cysteine 202-cysteine 217, cysteine 222-cysteine 234, cysteine 229-cysteine 247, and cysteine 241-cysteine 256. 2 N-linked (GlcNAc...) asparagine glycosylation sites follow: asparagine 159 and asparagine 178. Asparagine 259 is a glycosylation site (N-linked (GlcNAc...) asparagine). The 44-residue stretch at 264-307 (RCYPREWACPGSGRCISIDKVCDGVPDCPEGDDENNVTSGRTCG) folds into the LDL-receptor class A 7 domain. Intrachain disulfides connect cysteine 265–cysteine 278, cysteine 272–cysteine 291, and cysteine 285–cysteine 306. N-linked (GlcNAc...) asparagine glycosylation is found at asparagine 299 and asparagine 340. In terms of domain architecture, EGF-like 1; calcium-binding spans 347 to 382 (DFDDCQIWGICDQKCENRQGRHQCLCEEGYILERGQ). Disulfide bonds link cysteine 351–cysteine 361 and cysteine 357–cysteine 370. LDL-receptor class B repeat units follow at residues 435 to 477 (HRVF…DWIN), 478 to 520 (NKLY…DPTV), 521 to 567 (GYLF…DLVS), and 568 to 612 (KRVY…FEEH). N-linked (GlcNAc...) asparagine glycosylation is present at asparagine 462. Asparagine 657 carries N-linked (GlcNAc...) asparagine glycosylation. LDL-receptor class B repeat units follow at residues 752–794 (STVF…DWIS), 795–836 (RNLY…HPTA), 837–880 (GYMF…DWSA), and 881–924 (SRLY…FKDN). Asparagine 865 carries N-linked (GlcNAc...) asparagine glycosylation. Residues 1024–1060 (QCGSLSFPCNNGKCVPSFFRCDGVDDCHDNSDEHQCG) enclose the LDL-receptor class A 8 domain. Intrachain disulfides connect cysteine 1025-cysteine 1037, cysteine 1032-cysteine 1050, and cysteine 1044-cysteine 1059. A glycan (N-linked (GlcNAc...) asparagine) is linked at asparagine 1063. LDL-receptor class A domains follow at residues 1065 to 1102 (TCSP…QNCP), 1109 to 1145 (TCPS…KNCQ), 1149 to 1185 (TCQP…AGCV), 1187 to 1224 (NCTS…AGCP), 1230 to 1268 (MCHP…TGCV), 1271 to 1307 (TCSP…KDCP), and 1312 to 1350 (HCPS…PLCN). Disulfide bonds link cysteine 1066–cysteine 1079, cysteine 1073–cysteine 1092, cysteine 1086–cysteine 1101, cysteine 1110–cysteine 1122, cysteine 1117–cysteine 1135, cysteine 1129–cysteine 1144, cysteine 1150–cysteine 1162, cysteine 1157–cysteine 1175, and cysteine 1169–cysteine 1184. Ca(2+) is bound by residues tryptophan 1127, aspartate 1130, aspartate 1132, aspartate 1134, aspartate 1140, and glutamate 1141. N-linked (GlcNAc...) asparagine glycosylation is present at asparagine 1187. Intrachain disulfides connect cysteine 1188-cysteine 1201, cysteine 1195-cysteine 1214, cysteine 1208-cysteine 1223, cysteine 1231-cysteine 1244, cysteine 1238-cysteine 1257, cysteine 1251-cysteine 1267, cysteine 1272-cysteine 1284, cysteine 1279-cysteine 1297, cysteine 1291-cysteine 1306, cysteine 1313-cysteine 1326, cysteine 1320-cysteine 1339, cysteine 1333-cysteine 1349, cysteine 1354-cysteine 1365, cysteine 1361-cysteine 1374, cysteine 1376-cysteine 1389, cysteine 1395-cysteine 1405, cysteine 1401-cysteine 1414, and cysteine 1416-cysteine 1429. Ca(2+) contacts are provided by tyrosine 1206, aspartate 1209, valine 1211, aspartate 1213, aspartate 1219, and glutamate 1220. N-linked (GlcNAc...) asparagine glycans are attached at residues asparagine 1328 and asparagine 1341. Positions 1350 to 1390 (NQDSCSHFNGGCTHQCMQGPFGATCLCPLGYQLANDTKTCE) constitute an EGF-like 2 domain. The N-linked (GlcNAc...) asparagine glycan is linked to asparagine 1384. The 40-residue stretch at 1391 to 1430 (DINECDIPGFCSQHCVNMRGSFRCACDPEYTLESDGRTCK) folds into the EGF-like 3; calcium-binding domain. N-linked (GlcNAc...) asparagine glycans are attached at residues asparagine 1451, asparagine 1497, and asparagine 1551. LDL-receptor class B repeat units lie at residues 1479–1521 (GRVF…DWIG), 1522–1564 (RNLY…DPRM), 1567–1610 (NVMF…DYPN), 1611–1655 (RLIY…FEDF), and 1656–1696 (VYWT…IHPS). 3 N-linked (GlcNAc...) asparagine glycosylation sites follow: asparagine 1676, asparagine 1733, and asparagine 1811. 9 LDL-receptor class B repeats span residues 1791–1833 (QFIY…DWVS), 1834–1883 (RNIY…DPAR), 1884–1931 (GKLY…DIQE), 1932–1973 (QKLY…YGSF), 1974–2014 (LYYS…YHRR), 2108–2157 (GFIY…DWAA), 2158–2202 (GNLY…DPKH), 2203–2246 (RYLF…DHDT), and 2247–2290 (GYIY…FGES). N-linked (GlcNAc...) asparagine glycans are attached at residues asparagine 2134, asparagine 2178, and asparagine 2225. Asparagine 2396 carries N-linked (GlcNAc...) asparagine glycosylation. 5 LDL-receptor class B repeats span residues 2432-2478 (NRIF…DWIN), 2479-2519 (RRIY…DPCR), 2520-2563 (GYMY…DLET), 2564-2605 (DLLY…YGQY), and 2606-2647 (IYWT…VVKT). Residues asparagine 2488 and asparagine 2548 are each glycosylated (N-linked (GlcNAc...) asparagine). LDL-receptor class A domains follow at residues 2700 to 2738 (RCNQ…TVCA), 2741 to 2777 (TCRS…AGCL), 2780 to 2819 (NCNS…KNCP), 2822 to 2861 (TCPP…IYCA), 2864 to 2902 (TCRS…DTCG), 2907 to 2946 (TCRA…HHCE), 2949 to 2991 (NCSS…QNCT), 2994 to 3030 (TCSA…RGCS), 3033 to 3071 (PCHA…HLCH), and 3076 to 3112 (TCPL…KGCG). Disulfide bonds link cysteine 2701–cysteine 2713, cysteine 2708–cysteine 2726, cysteine 2720–cysteine 2737, cysteine 2742–cysteine 2754, cysteine 2749–cysteine 2767, cysteine 2761–cysteine 2776, cysteine 2781–cysteine 2794, cysteine 2789–cysteine 2807, cysteine 2801–cysteine 2818, cysteine 2823–cysteine 2836, cysteine 2830–cysteine 2849, cysteine 2843–cysteine 2860, cysteine 2865–cysteine 2878, cysteine 2872–cysteine 2891, cysteine 2885–cysteine 2901, cysteine 2908–cysteine 2920, cysteine 2915–cysteine 2933, and cysteine 2927–cysteine 2945. N-linked (GlcNAc...) asparagine glycosylation is present at asparagine 2782. Asparagine 2810 carries an N-linked (GlcNAc...) asparagine glycan. Asparagine 2949 carries N-linked (GlcNAc...) asparagine glycosylation. Disulfide bonds link cysteine 2950/cysteine 2967, cysteine 2957/cysteine 2980, cysteine 2974/cysteine 2990, cysteine 2995/cysteine 3007, cysteine 3002/cysteine 3020, cysteine 3014/cysteine 3029, cysteine 3034/cysteine 3046, cysteine 3041/cysteine 3059, cysteine 3053/cysteine 3070, cysteine 3077/cysteine 3089, cysteine 3084/cysteine 3102, cysteine 3096/cysteine 3111, cysteine 3116/cysteine 3128, cysteine 3124/cysteine 3137, cysteine 3139/cysteine 3152, cysteine 3158/cysteine 3169, cysteine 3165/cysteine 3178, and cysteine 3180/cysteine 3193. An N-linked (GlcNAc...) asparagine glycan is attached at asparagine 2989. Positions 3112–3153 (GINECLDSSISRCDHNCTDTITSFYCSCLPGYKLMSDKRSCV) constitute an EGF-like 4 domain. Asparagine 3127 carries N-linked (GlcNAc...) asparagine glycosylation. Positions 3154–3194 (DIDECKESPQLCSQKCENVVGSYICKCAPGYIREPDGKSCR) constitute an EGF-like 5; calcium-binding domain. 4 N-linked (GlcNAc...) asparagine glycosylation sites follow: asparagine 3213, asparagine 3259, asparagine 3317, and asparagine 3357. 5 LDL-receptor class B repeats span residues 3241–3283 (KRLY…DWVS), 3284–3326 (RKLY…EHPR), 3335–3378 (GHVY…DYTN), 3379–3421 (DLLY…FEDT), and 3422–3462 (VFWT…YHPY). Asparagine 3448 carries an N-linked (GlcNAc...) asparagine glycan. LDL-receptor class A domains are found at residues 3513 to 3551 (MCSS…DLCP), 3554 to 3592 (FCRL…VLCE), 3595 to 3633 (RCES…SHCA), 3636 to 3674 (TCRP…DECT), 3679 to 3717 (NCDN…QGCE), 3720 to 3757 (PCHP…ENCV), 3760 to 3796 (ECSE…RDCE), and 3799 to 3835 (TCHP…SACP). 24 cysteine pairs are disulfide-bonded: cysteine 3514–cysteine 3527, cysteine 3521–cysteine 3540, cysteine 3534–cysteine 3550, cysteine 3555–cysteine 3567, cysteine 3562–cysteine 3580, cysteine 3574–cysteine 3591, cysteine 3596–cysteine 3608, cysteine 3603–cysteine 3621, cysteine 3615–cysteine 3632, cysteine 3637–cysteine 3649, cysteine 3644–cysteine 3662, cysteine 3656–cysteine 3673, cysteine 3680–cysteine 3694, cysteine 3688–cysteine 3707, cysteine 3701–cysteine 3716, cysteine 3721–cysteine 3734, cysteine 3729–cysteine 3747, cysteine 3741–cysteine 3756, cysteine 3761–cysteine 3773, cysteine 3768–cysteine 3786, cysteine 3780–cysteine 3795, cysteine 3800–cysteine 3812, cysteine 3807–cysteine 3825, and cysteine 3819–cysteine 3834. A glycan (N-linked (GlcNAc...) asparagine) is linked at asparagine 3566. Asparagine 3682 carries an N-linked (GlcNAc...) asparagine glycan. The N-linked (GlcNAc...) asparagine glycan is linked to asparagine 3840. 3 consecutive LDL-receptor class A domains span residues 3843-3881 (YCPA…HLCF), 3884-3923 (PCES…EHCR), and 3929-3965 (PCTD…TGCN). Disulfide bonds link cysteine 3844–cysteine 3856, cysteine 3851–cysteine 3869, cysteine 3863–cysteine 3880, cysteine 3885–cysteine 3898, cysteine 3893–cysteine 3911, cysteine 3905–cysteine 3922, cysteine 3930–cysteine 3942, cysteine 3937–cysteine 3955, and cysteine 3949–cysteine 3964. The region spanning 3968–4003 (DNRTCAENICEQNCTQLSSGGFICSCRPGFKPSTSD) is the EGF-like 6 domain. Residues asparagine 3969 and asparagine 3980 are each glycosylated (N-linked (GlcNAc...) asparagine). Cystine bridges form between cysteine 3972/cysteine 3981, cysteine 3977/cysteine 3991, cysteine 4013/cysteine 4023, cysteine 4019/cysteine 4032, and cysteine 4034/cysteine 4049. One can recognise an EGF-like 7; calcium-binding domain in the interval 4009–4050 (DINECEEFGICPQSCRNSKGSYECFCVDGFKSMSTHYGERCA). Residue asparagine 4070 is glycosylated (N-linked (GlcNAc...) asparagine). 3 LDL-receptor class B repeats span residues 4156–4198 (RHIY…NPKL), 4199–4242 (GLMF…DYLN), and 4244–4285 (DRVY…FEDK). The N-linked (GlcNAc...) asparagine glycan is linked to asparagine 4329. One can recognise an EGF-like 8 domain in the interval 4379–4413 (MPPPCRCMHGGNCYFDENELPKCKCSSGYSGEYCE). Cystine bridges form between cysteine 4383–cysteine 4391, cysteine 4385–cysteine 4401, and cysteine 4403–cysteine 4412. The chain crosses the membrane as a helical span at residues 4426-4446 (MAVLLTFVIVIIVGALVLVGL). At 4447-4660 (FHYRKTGSLL…ANLVKEDSDV (214 aa)) the chain is on the cytoplasmic side. Positions 4454 to 4463 (SLLPTLPKLP) match the SH3-binding motif. A PxLPxI/L motif 1; mediates interaction with ANKRA2 motif is present at residues 4457–4462 (PTLPKL). Positions 4460–4465 (PKLPSL) match the PxLPxI/L motif 2; mediates interaction with ANKRA2 motif. Phosphoserine occurs at positions 4464 and 4467. Positions 4522-4527 (FENPMY) match the Endocytosis signal motif. The segment at 4559 to 4582 (NYGRPIDPSEIVPEPKPASPGADE) is disordered. At serine 4577 the chain carries Phosphoserine. The interval 4597–4610 (QTTNFENPIYAEMD) is interaction with DAB2. Residues 4603 to 4606 (NPIY) carry the NPXY motif motif. The short motif at 4606-4609 (YAEM) is the SH2-binding element. Residues 4617–4660 (VAVAPPPSPSLPAKASKRNLTPGYTATEDTFKDTANLVKEDSDV) form a disordered region. The short motif at 4619–4630 (VAPPPSPSLPAK) is the SH3-binding element. Serine 4624 is subject to Phosphoserine. Positions 4634–4644 (RNLTPGYTATE) are enriched in polar residues. Threonine 4637 carries the phosphothreonine modification. Serine 4658 is subject to Phosphoserine.

The protein belongs to the LDLR family. Binds plasminogen, extracellular matrix components, plasminogen activator-plasminogen activator inhibitor type I complex, apolipoprotein E-enriched beta-VLDL, lipoprotein lipase, lactoferrin, CLU/clusterin and calcium. Forms a multimeric complex together with LRPAP1. Interacts (via PxLPxI/L motif) with ANKRA2 (via ankyrin repeats). Interacts with LRP2BP. Interacts (via NPXY motif) with DAB2; the interaction is not affected by tyrosine phosphorylation of the NPXY motif. Interacts with MB. Interacts with BMP4. Interacts with the Sonic hedgehog protein N-product which is the active product of SHH. Interacts with CST3 in a calcium-dependent manner. Interacts with the vitamin-D binding protein GC/DBP. Interacts with sex hormone-binding protein SHBG. Interacts with angiotensin-2. Also interacts with angiotensin 1-7. Interacts with APOM. Interacts with selenoprotein SEPP1. Interacts with LEP. Interacts with ALB. Interacts with the antiapoptotic protein BIRC5/survivin. Interacts with matrix metalloproteinase MMP2 in complex with metalloproteinase inhibitor TIMP1. In neurons, forms a trimeric complex with APP and APPB1/FE65. Interacts with LDLRAP1/ARH; mediates trafficking of LRP2 to the endocytic recycling compartment. Does not interact with beta-amyloid protein 40 alone but interacts with the complex composed of beta-amyloid protein 40 and CLU/APOJ. Interacts with MDK. In terms of processing, a fraction undergoes proteolytic cleavage of the extracellular domain at the cell membrane to generate a cytoplasmic tail fragment. This is internalized into the early endosome from where it trafficks in an LDLRAP1/ARH-dependent manner to the endocytic recycling compartment (ERC). In the ERC, it is further cleaved by gamma-secretase to release a fragment which translocates to the nucleus and mediates transcriptional repression. Post-translationally, N-glycosylation is required for ligand binding. In the inner ear, expressed in the lumen of the endolymphatic sac where it localizes to macrophage-like cells as well as to mitochondria-rich and ribosome-rich epithelial cells (at protein level). In the inner ear, expressed in marginal cells of the stria vascularis, epithelial cells at the spiral prominence, epithelial cells of Reissner's membrane facing the cochlear duct, and Kolliker's organ (at protein level). Expressed in the choroid plexus epithelium in the brain (at protein level). In the brain, also expressed in astrocytes (at protein level). Expression also detected in epithelial cells of the kidney glomerulus and proximal tubule, lung, epididymis and yolk sac.

It localises to the apical cell membrane. It is found in the endosome lumen. The protein localises to the membrane. Its subcellular location is the clathrin-coated pit. The protein resides in the cell projection. It localises to the dendrite. It is found in the axon. In terms of biological role, multiligand endocytic receptor. Acts together with CUBN to mediate endocytosis of high-density lipoproteins. Mediates receptor-mediated uptake of polybasic drugs such as aprotinin, aminoglycosides and polymyxin B. In the kidney, mediates the tubular uptake and clearance of leptin. Also mediates transport of leptin across the blood-brain barrier through endocytosis at the choroid plexus epithelium. Endocytosis of leptin in neuronal cells is required for hypothalamic leptin signaling and leptin-mediated regulation of feeding and body weight. Mediates endocytosis and subsequent lysosomal degradation of CST3 in kidney proximal tubule cells. Mediates renal uptake of 25-hydroxyvitamin D3 in complex with the vitamin D3 transporter GC/DBP. Mediates renal uptake of metallothionein-bound heavy metals. Together with CUBN, mediates renal reabsorption of myoglobin. Mediates renal uptake and subsequent lysosomal degradation of APOM. Plays a role in kidney selenium homeostasis by mediating renal endocytosis of selenoprotein SEPP1. Mediates renal uptake of the antiapoptotic protein BIRC5/survivin which may be important for functional integrity of the kidney. Mediates renal uptake of matrix metalloproteinase MMP2 in complex with metalloproteinase inhibitor TIMP1. Mediates endocytosis of Sonic hedgehog protein N-product (ShhN), the active product of SHH. Also mediates ShhN transcytosis. In the embryonic neuroepithelium, mediates endocytic uptake and degradation of BMP4, is required for correct SHH localization in the ventral neural tube and plays a role in patterning of the ventral telencephalon. Required at the onset of neurulation to sequester SHH on the apical surface of neuroepithelial cells of the rostral diencephalon ventral midline and to control PTCH1-dependent uptake and intracellular trafficking of SHH. During neurulation, required in neuroepithelial cells for uptake of folate bound to the folate receptor FOLR1 which is necessary for neural tube closure. In the adult brain, negatively regulates BMP signaling in the subependymal zone which enables neurogenesis to proceed. In astrocytes, mediates endocytosis of ALB which is required for the synthesis of the neurotrophic factor oleic acid. Involved in neurite branching. During optic nerve development, required for SHH-mediated migration and proliferation of oligodendrocyte precursor cells. Mediates endocytic uptake and clearance of SHH in the retinal margin which protects retinal progenitor cells from mitogenic stimuli and keeps them quiescent. Plays a role in reproductive organ development by mediating uptake in reproductive tissues of androgen and estrogen bound to the sex hormone binding protein SHBG. Mediates endocytosis of angiotensin-2. Also mediates endocytosis of angiotensin 1-7. Binds to the complex composed of beta-amyloid protein 40 and CLU/APOJ and mediates its endocytosis and lysosomal degradation. Required for embryonic heart development. Required for normal hearing, possibly through interaction with estrogen in the inner ear. This Rattus norvegicus (Rat) protein is Low-density lipoprotein receptor-related protein 2 (Lrp2).